Reading from the N-terminus, the 503-residue chain is Transcription termination/antitermination protein NusA (503 aa).

The 65-residue stretch at 139–203 folds into the S1 motif domain; that stretch reads GDIINGIVKR…KGPQIFLSRV (65 aa). Positions 308-378 constitute a KH domain; that stretch reads SHKVEVVVSQ…LDVEEVIGQL (71 aa).

This sequence belongs to the NusA family. In terms of assembly, monomer. Binds directly to the core enzyme of the DNA-dependent RNA polymerase and to nascent RNA.

The protein localises to the cytoplasm. In terms of biological role, participates in both transcription termination and antitermination. This is Transcription termination/antitermination protein NusA from Rickettsia prowazekii (strain Madrid E).